Consider the following 330-residue polypeptide: Mycothiol acetyltransferase (330 aa).

N-acetyltransferase domains lie at leucine 5–arginine 142 and valine 171–proline 328. 1D-myo-inositol 2-(L-cysteinylamino)-2-deoxy-alpha-D-glucopyranoside is bound at residue glutamate 36. Valine 80–valine 82 contributes to the acetyl-CoA binding site. The tract at residues arginine 142 to proline 161 is disordered. 1D-myo-inositol 2-(L-cysteinylamino)-2-deoxy-alpha-D-glucopyranoside contacts are provided by glutamate 198, lysine 238, and glutamate 254. Acetyl-CoA contacts are provided by residues valine 258–valine 260 and glutamine 265–arginine 271. Tyrosine 292 contacts 1D-myo-inositol 2-(L-cysteinylamino)-2-deoxy-alpha-D-glucopyranoside. Residue asparagine 297 to arginine 302 coordinates acetyl-CoA.

The protein belongs to the acetyltransferase family. MshD subfamily. In terms of assembly, monomer.

It carries out the reaction 1D-myo-inositol 2-(L-cysteinylamino)-2-deoxy-alpha-D-glucopyranoside + acetyl-CoA = mycothiol + CoA + H(+). Functionally, catalyzes the transfer of acetyl from acetyl-CoA to desacetylmycothiol (Cys-GlcN-Ins) to form mycothiol. The chain is Mycothiol acetyltransferase from Nocardiopsis dassonvillei (strain ATCC 23218 / DSM 43111 / CIP 107115 / JCM 7437 / KCTC 9190 / NBRC 14626 / NCTC 10488 / NRRL B-5397 / IMRU 509) (Actinomadura dassonvillei).